A 198-amino-acid polypeptide reads, in one-letter code: Suppressor of cytokine signaling 2 (198 aa).

An interaction with AREL1 region spans residues 1-75; the sequence is MTLRCLESSG…PEGTFLIRDS (75 aa). Positions 6 to 30 are disordered; the sequence is LESSGNGAEGAQSQWGTAGSAEEPS. Positions 8–22 are enriched in polar residues; that stretch reads SSGNGAEGAQSQWGT. 2 positions are modified to phosphoserine: S30 and S52. An SH2 domain is found at 48 to 156; sequence WYWGSMTVNE…TVHLYLTKPL (109 aa). One can recognise an SOCS box domain in the interval 151–197; sequence YLTKPLYTSAPPLQHLCRLTINKCTSTVWGLPLPTRLKDYLEEYKFQ. K173 participates in a covalent cross-link: Glycyl lysine isopeptide (Lys-Gly) (interchain with G-Cter in ubiquitin).

Substrate-recognition component of the ECS(SOCS2) complex, composed of SOCS2, CUL5, ELOB, ELOC and RNF7/RBX2. Interacts with IGF1R. Interacts with DCUN1D1. In terms of processing, ubiquitinated; mediated by AREL1 and leading to its subsequent proteasomal degradation. Ubiquitination is dependent on its phosphorylation at Ser-52, by PKC. Ubiquitination is stimulated by LPS. Phosphorylation at Ser-52 by PKC facilitates its ubiquitination and proteasomal degradation.

Its subcellular location is the cytoplasm. Its pathway is protein modification; protein ubiquitination. Functionally, substrate-recognition component of a cullin-5-RING E3 ubiquitin-protein ligase complex (ECS complex, also named CRL5 complex), which mediates the ubiquitination and subsequent proteasomal degradation of target proteins, such as EPOR and GHR. Specifically recognizes and binds phosphorylated proteins via its SH2 domain, promoting their ubiquitination. The ECS(SOCS2) complex acts as a key regulator of growth hormone receptor (GHR) levels by mediating ubiquitination and degradation of GHR, following GHR phosphorylation by JAK2. The ECS(SOCS2) also catalyzes ubiquitination and degradation of JAK2-phosphorylated EPOR. In Bos taurus (Bovine), this protein is Suppressor of cytokine signaling 2 (SOCS2).